The primary structure comprises 271 residues: Proteasome inhibitor PI31 subunit (271 aa).

Ala2 carries the N-acetylalanine modification. The segment at 2–150 (AGLEVLFASA…PIHEQWEKAR (149 aa)) is important for homodimerization and interaction with FBXO7. Phosphoserine is present on residues Ser153 and Ser189. Arg205 bears the Omega-N-methylarginine mark. The residue at position 219 (Arg219) is an Asymmetric dimethylarginine. Positions 226–271 (SGLPNRLPPGAVPPGARFDPFGPIGTSPSGPNPDHLPPPGYDDMYL) are disordered. Position 231 is an omega-N-methylarginine (Arg231). At Ser252 the chain carries Phosphoserine. Pro residues predominate over residues 255-265 (GPNPDHLPPPG).

Belongs to the proteasome inhibitor PI31 family. As to quaternary structure, monomer and homodimer. Interacts with FBXO7.

It localises to the cytoplasm. The protein resides in the endoplasmic reticulum. Its function is as follows. Plays an important role in control of proteasome function. Inhibits the hydrolysis of protein and peptide substrates by the 20S proteasome. Also inhibits the activation of the proteasome by the proteasome regulatory proteins PA700 and PA28. The protein is Proteasome inhibitor PI31 subunit (Psmf1) of Mus musculus (Mouse).